We begin with the raw amino-acid sequence, 110 residues long: MFNLGNLGEMMKMMKSMQENIEKAKEELRKEEIVVEVGGGMVKVILNGLGEIKDVLIDKTLLTEDNHEILQDLLVAAFNEANRRTKEVMGEKMTQAAGLPSNIPGLGNLF.

This sequence belongs to the YbaB/EbfC family. As to quaternary structure, homodimer.

The protein resides in the cytoplasm. The protein localises to the nucleoid. Binds to DNA and alters its conformation. May be involved in regulation of gene expression, nucleoid organization and DNA protection. This Persephonella marina (strain DSM 14350 / EX-H1) protein is Nucleoid-associated protein PERMA_0533.